The following is a 555-amino-acid chain: CTP synthase (555 aa).

Residues 1 to 270 (MTKFVFVTGG…DGLICDKLRL (270 aa)) form an amidoligase domain region. A CTP-binding site is contributed by Ser-13. Ser-13 provides a ligand contact to UTP. ATP is bound by residues 14–19 (SLGKGI) and Asp-71. Positions 71 and 144 each coordinate Mg(2+). CTP-binding positions include 151–153 (DIE), 191–196 (KTKPTQ), and Lys-227. UTP-binding positions include 191–196 (KTKPTQ) and Lys-227. The Glutamine amidotransferase type-1 domain maps to 295-547 (NIVMVGKYVE…IKAALDHQAA (253 aa)). L-glutamine is bound at residue Gly-356. Catalysis depends on Cys-383, which acts as the Nucleophile; for glutamine hydrolysis. Residues 384-387 (LGMQ), Glu-407, and Arg-473 each bind L-glutamine. Catalysis depends on residues His-520 and Glu-522.

Belongs to the CTP synthase family. As to quaternary structure, homotetramer.

It carries out the reaction UTP + L-glutamine + ATP + H2O = CTP + L-glutamate + ADP + phosphate + 2 H(+). The enzyme catalyses L-glutamine + H2O = L-glutamate + NH4(+). It catalyses the reaction UTP + NH4(+) + ATP = CTP + ADP + phosphate + 2 H(+). It participates in pyrimidine metabolism; CTP biosynthesis via de novo pathway; CTP from UDP: step 2/2. Its activity is regulated as follows. Allosterically activated by GTP, when glutamine is the substrate; GTP has no effect on the reaction when ammonia is the substrate. The allosteric effector GTP functions by stabilizing the protein conformation that binds the tetrahedral intermediate(s) formed during glutamine hydrolysis. Inhibited by the product CTP, via allosteric rather than competitive inhibition. In terms of biological role, catalyzes the ATP-dependent amination of UTP to CTP with either L-glutamine or ammonia as the source of nitrogen. Regulates intracellular CTP levels through interactions with the four ribonucleotide triphosphates. The protein is CTP synthase of Albidiferax ferrireducens (strain ATCC BAA-621 / DSM 15236 / T118) (Rhodoferax ferrireducens).